Reading from the N-terminus, the 379-residue chain is DNA replication and repair protein RecF (379 aa).

30–37 (GDNAQGKS) is an ATP binding site.

Belongs to the RecF family.

Its subcellular location is the cytoplasm. Functionally, the RecF protein is involved in DNA metabolism; it is required for DNA replication and normal SOS inducibility. RecF binds preferentially to single-stranded, linear DNA. It also seems to bind ATP. The polypeptide is DNA replication and repair protein RecF (Thermosynechococcus vestitus (strain NIES-2133 / IAM M-273 / BP-1)).